The chain runs to 62 residues: Photosystem II reaction center protein Z (62 aa).

2 helical membrane-spanning segments follow: residues 8–28 and 41–61; these read ALLLLVVMSFVLIVGVPVLYA and LVGGLAWTALVVLVGVLNYFV.

This sequence belongs to the PsbZ family. As to quaternary structure, PSII is composed of 1 copy each of membrane proteins PsbA, PsbB, PsbC, PsbD, PsbE, PsbF, PsbH, PsbI, PsbJ, PsbK, PsbL, PsbM, PsbT, PsbX, PsbY, PsbZ, Psb30/Ycf12, peripheral proteins PsbO, CyanoQ (PsbQ), PsbU, PsbV and a large number of cofactors. It forms dimeric complexes.

It is found in the cellular thylakoid membrane. May control the interaction of photosystem II (PSII) cores with the light-harvesting antenna, regulates electron flow through the 2 photosystem reaction centers. PSII is a light-driven water plastoquinone oxidoreductase, using light energy to abstract electrons from H(2)O, generating a proton gradient subsequently used for ATP formation. The chain is Photosystem II reaction center protein Z from Synechococcus elongatus (strain ATCC 33912 / PCC 7942 / FACHB-805) (Anacystis nidulans R2).